Consider the following 968-residue polypeptide: RNA polymerase-associated protein RapA (968 aa).

The Helicase ATP-binding domain occupies 164 to 334 (DVGRRHAPRV…FARLRLLDPN (171 aa)). Position 177–184 (177–184 (DEVGLGKT)) interacts with ATP. The DEAH box signature appears at 280–283 (DEAH). One can recognise a Helicase C-terminal domain in the interval 490–685 (RVEWLMGYLT…ALKAQLEQGR (196 aa)).

It belongs to the SNF2/RAD54 helicase family. RapA subfamily. As to quaternary structure, interacts with the RNAP. Has a higher affinity for the core RNAP than for the holoenzyme. Its ATPase activity is stimulated by binding to RNAP.

Transcription regulator that activates transcription by stimulating RNA polymerase (RNAP) recycling in case of stress conditions such as supercoiled DNA or high salt concentrations. Probably acts by releasing the RNAP, when it is trapped or immobilized on tightly supercoiled DNA. Does not activate transcription on linear DNA. Probably not involved in DNA repair. The chain is RNA polymerase-associated protein RapA from Salmonella newport (strain SL254).